The sequence spans 354 residues: Allantoicase (354 aa).

This sequence belongs to the allantoicase family.

It catalyses the reaction allantoate + H2O = (S)-ureidoglycolate + urea. The protein operates within nitrogen metabolism; (S)-allantoin degradation; (S)-ureidoglycolate from allantoate (aminidohydrolase route): step 1/1. In terms of biological role, utilization of purines as secondary nitrogen sources, when primary sources are limiting. This chain is Allantoicase (alc-1), found in Neurospora crassa (strain ATCC 24698 / 74-OR23-1A / CBS 708.71 / DSM 1257 / FGSC 987).